Consider the following 221-residue polypeptide: Endonuclease V (221 aa).

Mg(2+)-binding residues include aspartate 43 and aspartate 109.

Belongs to the endonuclease V family. Mg(2+) is required as a cofactor.

It localises to the cytoplasm. It carries out the reaction Endonucleolytic cleavage at apurinic or apyrimidinic sites to products with a 5'-phosphate.. Its function is as follows. DNA repair enzyme involved in the repair of deaminated bases. Selectively cleaves double-stranded DNA at the second phosphodiester bond 3' to a deoxyinosine leaving behind the intact lesion on the nicked DNA. The protein is Endonuclease V of Petrotoga mobilis (strain DSM 10674 / SJ95).